The following is a 119-amino-acid chain: Ribonuclease P protein component (119 aa).

It belongs to the RnpA family. In terms of assembly, consists of a catalytic RNA component (M1 or rnpB) and a protein subunit.

The catalysed reaction is Endonucleolytic cleavage of RNA, removing 5'-extranucleotides from tRNA precursor.. In terms of biological role, RNaseP catalyzes the removal of the 5'-leader sequence from pre-tRNA to produce the mature 5'-terminus. It can also cleave other RNA substrates such as 4.5S RNA. The protein component plays an auxiliary but essential role in vivo by binding to the 5'-leader sequence and broadening the substrate specificity of the ribozyme. In Streptococcus mutans serotype c (strain ATCC 700610 / UA159), this protein is Ribonuclease P protein component.